Reading from the N-terminus, the 225-residue chain is Uridylate kinase (225 aa).

An ATP-binding site is contributed by 9-10 (GS). Glycine 44 serves as a coordination point for UMP. ATP is bound by residues glycine 45 and arginine 49. Residues aspartate 66 and 114–120 (THPGHTT) contribute to the UMP site. ATP contacts are provided by threonine 140, asparagine 141, tyrosine 146, and aspartate 149.

The protein belongs to the UMP kinase family. Homohexamer.

It is found in the cytoplasm. It carries out the reaction UMP + ATP = UDP + ADP. Its pathway is pyrimidine metabolism; CTP biosynthesis via de novo pathway; UDP from UMP (UMPK route): step 1/1. Inhibited by UTP. In terms of biological role, catalyzes the reversible phosphorylation of UMP to UDP. This Thermococcus kodakarensis (strain ATCC BAA-918 / JCM 12380 / KOD1) (Pyrococcus kodakaraensis (strain KOD1)) protein is Uridylate kinase.